A 165-amino-acid polypeptide reads, in one-letter code: Ubiquitin D (165 aa).

Ubiquitin-like domains follow at residues serine 6–valine 81 and leucine 90–isoleucine 163.

Belongs to the ubiquitin D family. In terms of assembly, interacts directly with the 26S proteasome. Interacts with NUB1; this interaction facilitates the linking of UBD-conjugated target protein to the proteasome complex and accelerates its own degradation and that of its conjugates. Interacts (via ubiquitin-like 1 domain) with the spindle checkpoint protein MAD2L1 during mitosis. Present in aggresomes of proteasome inhibited cells. Interacts with HDAC6 under proteasome impairment conditions. Forms a thioester with UBA6 in cells stimulated with tumor necrosis factor-alpha (TNFa) and interferon-gamma (IFNg). Interacts with SQSTM1 and TP53/p53. In terms of processing, can be acetylated. In terms of tissue distribution, constitutively expressed in mature dendritic cells and B-cells. Mostly expressed in the reticuloendothelial system (e.g. thymus, spleen), the gastrointestinal system, kidney, lung and prostate gland.

The protein resides in the nucleus. The protein localises to the cytoplasm. In terms of biological role, ubiquitin-like protein modifier which can be covalently attached to target proteins and subsequently leads to their degradation by the 26S proteasome, in a NUB1-dependent manner. Conjugation to the target protein is activated by UBA6 via adenylation of its C-terminal glycine. Promotes the expression of the proteasome subunit beta type-9 (PSMB9/LMP2). Regulates TNF-alpha-induced and LPS-mediated activation of the central mediator of innate immunity NF-kappa-B by promoting TNF-alpha-mediated proteasomal degradation of ubiquitinated-I-kappa-B-alpha. Required for TNF-alpha-induced p65 nuclear translocation in renal tubular epithelial cells (RTECs). May be involved in dendritic cell (DC) maturation, the process by which immature dendritic cells differentiate into fully competent antigen-presenting cells that initiate T-cell responses. Mediates mitotic non-disjunction and chromosome instability, in long-term in vitro culture and cancers, by abbreviating mitotic phase and impairing the kinetochore localization of MAD2L1 during the prometaphase stage of the cell cycle. May be involved in the formation of aggresomes when proteasome is saturated or impaired. Mediates apoptosis in a caspase-dependent manner, especially in renal epithelium and tubular cells during renal diseases such as polycystic kidney disease and Human immunodeficiency virus (HIV)-associated nephropathy (HIVAN). The sequence is that of Ubiquitin D (UBD) from Homo sapiens (Human).